Here is a 268-residue protein sequence, read N- to C-terminus: MIQIQNTILGKIVDRKHEELADRLKQRNLKDVEQWVKEAPPVRGFAQSLRSKRPGVIAEIKKASPSKGVIRADFNPAEIAQQYEQAGAACLSVLTDVDFFQGADENIAIARQHCSLPALRKDFLIDPYNVVEARALQADCILLIVACLSDQQLEEMSKTAFEYDLDVLVEVHDEQELERALKLSEQCLLGVNNRNLKTFDVDLNTSLRLKKLLDPSRLLVTESGIATPQDVQLMQEHDIHSFLVGESFMKQPRPDQAFTELFGVPKLV.

The protein belongs to the TrpC family.

It carries out the reaction 1-(2-carboxyphenylamino)-1-deoxy-D-ribulose 5-phosphate + H(+) = (1S,2R)-1-C-(indol-3-yl)glycerol 3-phosphate + CO2 + H2O. The protein operates within amino-acid biosynthesis; L-tryptophan biosynthesis; L-tryptophan from chorismate: step 4/5. This is Indole-3-glycerol phosphate synthase (trpC) from Acinetobacter baylyi (strain ATCC 33305 / BD413 / ADP1).